The chain runs to 375 residues: Succinyl-diaminopimelate desuccinylase (375 aa).

Histidine 66 is a binding site for Zn(2+). Aspartate 68 is a catalytic residue. Aspartate 99 is a binding site for Zn(2+). The active-site Proton acceptor is glutamate 133. Residues glutamate 134, glutamate 162, and histidine 348 each contribute to the Zn(2+) site.

It belongs to the peptidase M20A family. DapE subfamily. Homodimer. Requires Zn(2+) as cofactor. It depends on Co(2+) as a cofactor.

The catalysed reaction is N-succinyl-(2S,6S)-2,6-diaminopimelate + H2O = (2S,6S)-2,6-diaminopimelate + succinate. Its pathway is amino-acid biosynthesis; L-lysine biosynthesis via DAP pathway; LL-2,6-diaminopimelate from (S)-tetrahydrodipicolinate (succinylase route): step 3/3. Catalyzes the hydrolysis of N-succinyl-L,L-diaminopimelic acid (SDAP), forming succinate and LL-2,6-diaminopimelate (DAP), an intermediate involved in the bacterial biosynthesis of lysine and meso-diaminopimelic acid, an essential component of bacterial cell walls. This Escherichia coli (strain SE11) protein is Succinyl-diaminopimelate desuccinylase.